A 501-amino-acid chain; its full sequence is Zinc finger protein PLAG1 (501 aa).

The tract at residues 1–30 is disordered; it reads MATVIPGDLSEVRDTQKVPSGKRKRGETKP. A Nuclear localization signal motif is present at residues 22-25; sequence KRKR. 7 consecutive C2H2-type zinc fingers follow at residues 34 to 56, 62 to 86, 92 to 114, 121 to 143, 150 to 172, 185 to 207, and 213 to 236; these read FPCQLCDKAFNSVEKLKVHSYSH, YKCTQQDCTKAFVSKYKLLRHMATH, HKCNYCEKMFHRKDHLKNHLHTH, FKCEECGKNYNTKLGFKRHLALH, LTCKVCLQTFESTGVLLEHLKTH, HQCEHCDRRFYTRKDVRRHMVVH, and FLCQYCAQRFGRKDHLTRHMKKSH. Composition is skewed to low complexity over residues 366–380 and 455–467; these read SGMPSSSQDSQASSS and TQLPPQTQDPQDP. Disordered stretches follow at residues 366–406 and 447–474; these read SGMP…GSVP and QEEAHSSMTQLPPQTQDPQDPSNSIGLG.

Belongs to the krueppel C2H2-type zinc-finger protein family. As to expression, expressed in nephroblastoma.

The protein resides in the nucleus. In terms of biological role, transcription factor and proto-oncogene whose activation results in up-regulation of target genes, such as IGFII, leading to uncontrolled cell proliferation. In Gallus gallus (Chicken), this protein is Zinc finger protein PLAG1 (PLAG1).